The sequence spans 637 residues: Chaperone protein HtpG (637 aa).

An a; substrate-binding region spans residues 1–345 (MSQQETHGFQ…SNDLPLNVSR (345 aa)). The b stretch occupies residues 346–562 (EILQDNHITK…EGEMSSQMIK (217 aa)). The c stretch occupies residues 563-637 (LMQAAGQPVP…MNQMLLANLK (75 aa)).

The protein belongs to the heat shock protein 90 family. In terms of assembly, homodimer.

The protein resides in the cytoplasm. Its function is as follows. Molecular chaperone. Has ATPase activity. This Shewanella sp. (strain MR-7) protein is Chaperone protein HtpG.